The chain runs to 583 residues: Phytoene desaturase (583 aa).

An N-terminal signal peptide occupies residues 1–20 (MAPPKHVIIIGAGAGGTATA). The chain crosses the membrane as a helical span at residues 531 to 551 (IIWFLLIALFAATLVLFIAFP).

Belongs to the carotenoid/retinoid oxidoreductase family. NAD(+) is required as a cofactor.

The protein resides in the membrane. It carries out the reaction 15-cis-phytoene + 5 A = all-trans-3,4-didehydrolycopene + 5 AH2. It participates in carotenoid biosynthesis; lycopene biosynthesis. Its function is as follows. Phytoene desaturase involved in the carotenoid biosynthesis pathway. Converts phytoene into 3,4-didehydrolycopene via the intermediary of phytofluene, zeta-carotene, neurosporene and lycopene, by introducing up to five double bonds into phytoene. This chain is Phytoene desaturase (carB), found in Phycomyces blakesleeanus (strain ATCC 8743b / DSM 1359 / FGSC 10004 / NBRC 33097 / NRRL 1555).